The following is a 507-amino-acid chain: ATP synthase subunit alpha (507 aa).

The disordered stretch occupies residues 118 to 141; the sequence is VDGLGPIETTETRPIESPAPGVMD. Residue 172 to 179 coordinates ATP; the sequence is GDRQTGKT.

The protein belongs to the ATPase alpha/beta chains family. F-type ATPases have 2 components, CF(1) - the catalytic core - and CF(0) - the membrane proton channel. CF(1) has five subunits: alpha(3), beta(3), gamma(1), delta(1), epsilon(1). CF(0) has three main subunits: a(1), b(2) and c(9-12). The alpha and beta chains form an alternating ring which encloses part of the gamma chain. CF(1) is attached to CF(0) by a central stalk formed by the gamma and epsilon chains, while a peripheral stalk is formed by the delta and b chains.

The protein resides in the cell membrane. It carries out the reaction ATP + H2O + 4 H(+)(in) = ADP + phosphate + 5 H(+)(out). Functionally, produces ATP from ADP in the presence of a proton gradient across the membrane. The alpha chain is a regulatory subunit. This is ATP synthase subunit alpha from Anoxybacillus flavithermus (strain DSM 21510 / WK1).